The following is an 81-amino-acid chain: Exodeoxyribonuclease 7 small subunit (81 aa).

Belongs to the XseB family. In terms of assembly, heterooligomer composed of large and small subunits.

The protein resides in the cytoplasm. It catalyses the reaction Exonucleolytic cleavage in either 5'- to 3'- or 3'- to 5'-direction to yield nucleoside 5'-phosphates.. In terms of biological role, bidirectionally degrades single-stranded DNA into large acid-insoluble oligonucleotides, which are then degraded further into small acid-soluble oligonucleotides. The polypeptide is Exodeoxyribonuclease 7 small subunit (Paramagnetospirillum magneticum (strain ATCC 700264 / AMB-1) (Magnetospirillum magneticum)).